The following is a 488-amino-acid chain: (S)-N-methylcoclaurine 3'-hydroxylase isozyme 2 (488 aa).

Residues 3–23 (VVTVALIAVIISSILYLLFGS) form a helical membrane-spanning segment. Cys430 is a heme binding site.

It belongs to the cytochrome P450 family. The cofactor is heme.

The protein resides in the endoplasmic reticulum membrane. It is found in the microsome membrane. It carries out the reaction (S)-N-methylcoclaurine + reduced [NADPH--hemoprotein reductase] + O2 = (S)-3'-hydroxy-N-methylcoclaurine + oxidized [NADPH--hemoprotein reductase] + H2O + H(+). Its pathway is alkaloid biosynthesis; (S)-reticuline biosynthesis; (S)-reticuline from (S)-norcoclaurine: step 3/4. 3'-hydroxylation of (S)-N-methylcoclaurine. The polypeptide is (S)-N-methylcoclaurine 3'-hydroxylase isozyme 2 (CYP80B2) (Eschscholzia californica (California poppy)).